Consider the following 38-residue polypeptide: MKVRSSIKKIDQDDQIVKRRGRLYVINKKKPRNKQRQG.

It belongs to the bacterial ribosomal protein bL36 family.

The sequence is that of Large ribosomal subunit protein bL36A from Prochlorococcus marinus (strain MIT 9515).